We begin with the raw amino-acid sequence, 151 residues long: SsrA-binding protein (151 aa).

Residues 131 to 151 are disordered; it reads KRESIKEKDWKRDQSRLIRQK.

It belongs to the SmpB family.

The protein localises to the cytoplasm. In terms of biological role, required for rescue of stalled ribosomes mediated by trans-translation. Binds to transfer-messenger RNA (tmRNA), required for stable association of tmRNA with ribosomes. tmRNA and SmpB together mimic tRNA shape, replacing the anticodon stem-loop with SmpB. tmRNA is encoded by the ssrA gene; the 2 termini fold to resemble tRNA(Ala) and it encodes a 'tag peptide', a short internal open reading frame. During trans-translation Ala-aminoacylated tmRNA acts like a tRNA, entering the A-site of stalled ribosomes, displacing the stalled mRNA. The ribosome then switches to translate the ORF on the tmRNA; the nascent peptide is terminated with the 'tag peptide' encoded by the tmRNA and targeted for degradation. The ribosome is freed to recommence translation, which seems to be the essential function of trans-translation. The chain is SsrA-binding protein from Rickettsia bellii (strain OSU 85-389).